The chain runs to 1677 residues: Vitellogenin (1677 aa).

An N-terminal signal peptide occupies residues 1–8 (LTIALVGS). The Vitellogenin domain maps to 17–655 (FSGSKTYQYK…NAASILPSAV (639 aa)). Disordered stretches follow at residues 1089–1232 (TLRG…SEEI) and 1252–1280 (FQNKRGRMSSSSSSSSSSSSQSTLNSKQD). Low complexity predominate over residues 1098-1122 (SSSSSSSSSSSSSSSSSSSSSSQQS). Residues 1123 to 1145 (RMEKRMEQDKLTENLERDRDHMR) show a composition bias toward basic and acidic residues. The span at 1169–1196 (SSSSSSSSSSSGSNSSSSSSSSSSSSSR) shows a compositional bias: low complexity. Residues Asn-1182, Asn-1202, Asn-1217, and Asn-1218 are each glycosylated (N-linked (GlcNAc...) asparagine). Residues 1197–1212 (SHNHRNNTRTLSKSKR) are compositionally biased toward basic residues. Low complexity-rich tracts occupy residues 1215–1229 (NNNNSSSSSGSSSSS) and 1260–1273 (SSSSSSSSSSSSQS). Positions 1490-1675 (SKCVAQENKF…TATEAASFCV (186 aa)) constitute a VWFD domain. Cystine bridges form between Cys-1492–Cys-1631 and Cys-1515–Cys-1674. A compositionally biased stretch (basic and acidic residues) spans 1636 to 1649 (GERRKEFRMPDGRQ). A disordered region spans residues 1636–1659 (GERRKEFRMPDGRQARGPSVSPTP).

Post-translationally, phosvitin, an egg yolk storage protein, is one of the most highly phosphorylated (10%) proteins in nature. As to expression, found in liver, testis and undifferentiated gonads of estrogen-treated fish. Not detected in the brain and spleen.

Functionally, precursor of the major egg-yolk proteins that are sources of nutrients during early development of oviparous organisms. The sequence is that of Vitellogenin from Acipenser transmontanus (White sturgeon).